We begin with the raw amino-acid sequence, 913 residues long: Ubiquitin carboxyl-terminal hydrolase 20 (913 aa).

The segment at 6–111 adopts a UBP-type zinc-finger fold; the sequence is DLCPHLDSIG…GSSKFSEQDS (106 aa). Residues C8, H10, C30, C33, C43, C48, C53, H60, H64, H70, C83, and C86 each coordinate Zn(2+). A phosphoserine mark is found at S111, S131, and S133. The region spanning 144–684 is the USP domain; sequence TGMKNLGNSC…EGYVLFYRKS (541 aa). C153 (nucleophile) is an active-site residue. Residues 256 to 414 form a disordered region; sequence LTEARDSDSS…SSSPPRASPV (159 aa). T257 carries the post-translational modification Phosphothreonine. The span at 258 to 278 shows a compositional bias: basic and acidic residues; that stretch reads EARDSDSSDTDEKREGDRSPS. S304 carries the phosphoserine modification. Residues 315 to 331 are compositionally biased toward basic and acidic residues; that stretch reads EASRAISEKERMKDRKF. Residue S367 is modified to Phosphoserine. Position 376 is a phosphothreonine (T376). A phosphoserine mark is found at S407 and S412. Residue H642 is the Proton acceptor of the active site. 2 DUSP domains span residues 686–779 and 788–891; these read EEAV…LYVC and ALAK…RQSV.

Belongs to the peptidase C19 family. USP20/USP33 subfamily. In terms of assembly, interacts with VHL, leading to its ubiquitination and subsequent degradation. Interacts with CCP110. Interacts with DIO2. Interacts with HIF1A. Interacts with ADRB2. Interacts with USP18. Post-translationally, ubiquitinated via a VHL-dependent pathway for proteasomal degradation.

The protein localises to the cytoplasm. Its subcellular location is the endoplasmic reticulum. The protein resides in the perinuclear region. It is found in the cytoskeleton. It localises to the microtubule organizing center. The protein localises to the centrosome. It carries out the reaction Thiol-dependent hydrolysis of ester, thioester, amide, peptide and isopeptide bonds formed by the C-terminal Gly of ubiquitin (a 76-residue protein attached to proteins as an intracellular targeting signal).. In terms of biological role, deubiquitinating enzyme that plays a role in many cellular processes including autophagy, cellular antiviral response or membrane protein biogenesis. Attenuates TLR4-mediated NF-kappa-B signaling by cooperating with beta-arrestin-2/ARRB2 and inhibiting TRAF6 autoubiquitination. Promotes cellular antiviral responses by deconjugating 'Lys-33' and 'Lys-48'-linked ubiquitination of STING1 leading to its stabilization. Plays an essential role in autophagy induction by regulating the ULK1 stability through deubiquitination of ULK1. Acts as a positive regulator for NF-kappa-B activation by TNF-alpha through deubiquitinating 'Lys-48'-linked polyubiquitination of SQSTM1, leading to its increased stability. Acts as a regulator of G-protein coupled receptor (GPCR) signaling by mediating the deubiquitination beta-2 adrenergic receptor (ADRB2). Plays a central role in ADRB2 recycling and resensitization after prolonged agonist stimulation by constitutively binding ADRB2, mediating deubiquitination of ADRB2 and inhibiting lysosomal trafficking of ADRB2. Upon dissociation, it is probably transferred to the translocated beta-arrestins, possibly leading to beta-arrestins deubiquitination and disengagement from ADRB2. This suggests the existence of a dynamic exchange between the ADRB2 and beta-arrestins. Deubiquitinates DIO2, thereby regulating thyroid hormone regulation. Deubiquitinates HIF1A, leading to stabilize HIF1A and enhance HIF1A-mediated activity. Deubiquitinates MCL1, a pivotal member of the anti-apoptotic Bcl-2 protein family to regulate its stability. Within the endoplasmic reticulum, participates with USP33 in the rescue of post-translationally targeted membrane proteins that are inappropriately ubiquitinated by the cytosolic protein quality control in the cytosol. The protein is Ubiquitin carboxyl-terminal hydrolase 20 (USP20) of Pongo abelii (Sumatran orangutan).